A 238-amino-acid chain; its full sequence is Arginine ABC transporter permease protein ArtQ (238 aa).

The Periplasmic segment spans residues 1–14 (MNEFFPLASAAGMT). Residues 11 to 223 (AGMTVGLAVC…VITLLSQYIL (213 aa)) enclose the ABC transmembrane type-1 domain. The helical transmembrane segment at 15–35 (VGLAVCALIVGLALAMFFAVW) threads the bilayer. At 36-48 (ESAKWRPVAWAGS) the chain is on the cytoplasmic side. The chain crosses the membrane as a helical span at residues 49–69 (ALVTILRGLPEILVVLFIYFG). Topologically, residues 70–98 (SSQLLLTLSDGFTINLGFVQIPVQMDIEN) are periplasmic. The chain crosses the membrane as a helical span at residues 99–119 (FDVSPFLCGVIALSLLYAAYA). The Cytoplasmic segment spans residues 120 to 168 (SQTLRGALKAVPVGQWESGQALGLSKSAIFFRLVMPQMWRHALPGLGNQ). The helical transmembrane segment at 169 to 189 (WLVLLKDTALVSLISVNDLML) threads the bilayer. The Periplasmic segment spans residues 190 to 201 (QTKSIATRTQEP). Residues 202 to 222 (FTWYIVAAAIYLVITLLSQYI) form a helical membrane-spanning segment. The Cytoplasmic portion of the chain corresponds to 223–238 (LKRIDLRATRFERRPS).

Belongs to the binding-protein-dependent transport system permease family. HisMQ subfamily. The complex is composed of two ATP-binding proteins (ArtP), two transmembrane proteins (ArtM and ArtQ) and two solute-binding proteins (ArtJ and ArtI).

It is found in the cell inner membrane. Part of the ABC transporter complex ArtPIQMJ involved in arginine transport. Probably responsible for the translocation of the substrate across the membrane. The polypeptide is Arginine ABC transporter permease protein ArtQ (artQ) (Escherichia coli O6:H1 (strain CFT073 / ATCC 700928 / UPEC)).